A 334-amino-acid chain; its full sequence is Procathepsin L (334 aa).

An N-terminal signal peptide occupies residues 1–17 (MTPLLLLAVLCLGTALA). The propeptide at 18–113 (TPKFDQTFNA…RLFQEPLMLQ (96 aa)) is activation peptide. Residue Glu122 participates in Zn(2+) binding. Cystine bridges form between Cys135–Cys178 and Cys169–Cys211. Cys138 is a catalytic residue. Zn(2+) contacts are provided by Glu163, Asp184, Glu199, Glu205, Asp227, Asp250, His253, Asp273, and Asp275. An intrachain disulfide couples Cys269 to Cys322. The active site involves His276. Positions 289–290 (DS) are excised as a propeptide. The active site involves Asn300.

Belongs to the peptidase C1 family. Dimer of a heavy and a light chain linked by disulfide bonds. Interacts with Long isoform of CD74/Ii chain; the interaction stabilizes the conformation of mature CTSL. During export along the endocytic pathway, pro-CTSL undergoes several proteolytic cleavages to generate the CTSL single-chain and two-chain mature forms, composed of a heavy chain linked to a light chain by disulfide bonds. Autocleavage; produces the single-chain CTSL after cleavage of the propeptide. The cleavage can be intermolecular. As to expression, both mature cathepsin L1 and procathepsin L are found in the upper epidermis. The lower epidermis predominantly contains procathepsin L. In seminiferous tubules expression is greater at stages VI-VII than at stages IX-XII.

The protein localises to the lysosome. The protein resides in the apical cell membrane. It is found in the cytoplasmic vesicle. Its subcellular location is the secretory vesicle. It localises to the chromaffin granule. The protein localises to the secreted. The protein resides in the extracellular space. The catalysed reaction is Specificity close to that of papain. As compared to cathepsin B, cathepsin L exhibits higher activity toward protein substrates, but has little activity on Z-Arg-Arg-NHMec, and no peptidyl-dipeptidase activity.. With respect to regulation, inhibited by the propeptide produced by autocleavage. Long isoform of CD74/Ii chain stabilizes the conformation of mature CTSL by binding to its active site and serving as a chaperone to help maintain a pool of mature enzyme in endocytic compartments and extracellular space of APCs. IFNG enhances the conversion into the CTSL mature and active form. Inhibited by CST6. Inhibited by the glycopeptide antibiotic teicoplanin. Inhibited by amantadine. In terms of biological role, thiol protease important for the overall degradation of proteins in lysosomes. Plays a critical for normal cellular functions such as general protein turnover, antigen processing and bone remodeling. Involved in the solubilization of cross-linked TG/thyroglobulin and in the subsequent release of thyroid hormone thyroxine (T4) by limited proteolysis of TG/thyroglobulin in the thyroid follicle lumen. In neuroendocrine chromaffin cells secretory vesicles, catalyzes the prohormone proenkephalin processing to the active enkephalin peptide neurotransmitter. In thymus, regulates CD4(+) T cell positive selection by generating the major histocompatibility complex class II (MHCII) bound peptide ligands presented by cortical thymic epithelial cells. Also mediates invariant chain processing in cortical thymic epithelial cells. Major elastin-degrading enzyme at neutral pH. Accumulates as a mature and active enzyme in the extracellular space of antigen presenting cells (APCs) to regulate degradation of the extracellular matrix in the course of inflammation. Secreted form generates endostatin from COL18A1. Critical for cardiac morphology and function. Plays an important role in hair follicle morphogenesis and cycling, as well as epidermal differentiation. Required for maximal stimulation of steroidogenesis by TIMP1. The chain is Procathepsin L from Rattus norvegicus (Rat).